The following is a 603-amino-acid chain: Probable methyltransferase PMT4 (603 aa).

The Cytoplasmic segment spans residues 1-12; the sequence is MKVASVIGLRPR. A helical; Signal-anchor for type II membrane protein membrane pass occupies residues 13-33; sequence ISGLLFLTLGVIALITILVPN. Residues 34–603 lie on the Lumenal side of the membrane; the sequence is SDSSSTTSTT…LVCQKPLLKK (570 aa). Asn96 and Asn393 each carry an N-linked (GlcNAc...) asparagine glycan.

This sequence belongs to the methyltransferase superfamily.

It is found in the endoplasmic reticulum membrane. The protein is Probable methyltransferase PMT4 of Arabidopsis thaliana (Mouse-ear cress).